Consider the following 429-residue polypeptide: Histidine--tRNA ligase (429 aa).

It belongs to the class-II aminoacyl-tRNA synthetase family. In terms of assembly, homodimer.

The protein localises to the cytoplasm. It carries out the reaction tRNA(His) + L-histidine + ATP = L-histidyl-tRNA(His) + AMP + diphosphate + H(+). The chain is Histidine--tRNA ligase from Desulfotalea psychrophila (strain LSv54 / DSM 12343).